Here is a 283-residue protein sequence, read N- to C-terminus: Bifunctional protein FolD 2 (283 aa).

NADP(+)-binding positions include 165-167 (GRG), Thr-192, and Val-233.

It belongs to the tetrahydrofolate dehydrogenase/cyclohydrolase family. In terms of assembly, homodimer.

It carries out the reaction (6R)-5,10-methylene-5,6,7,8-tetrahydrofolate + NADP(+) = (6R)-5,10-methenyltetrahydrofolate + NADPH. The enzyme catalyses (6R)-5,10-methenyltetrahydrofolate + H2O = (6R)-10-formyltetrahydrofolate + H(+). Its pathway is one-carbon metabolism; tetrahydrofolate interconversion. Its function is as follows. Catalyzes the oxidation of 5,10-methylenetetrahydrofolate to 5,10-methenyltetrahydrofolate and then the hydrolysis of 5,10-methenyltetrahydrofolate to 10-formyltetrahydrofolate. This is Bifunctional protein FolD 2 from Nocardioides sp. (strain ATCC BAA-499 / JS614).